Here is a 126-residue protein sequence, read N- to C-terminus: MTELETSIKIDVKTEYIEDQSSPNDERYLFRYTITIINLGKEPVTLKTRYWSITDSNQHLSVVQGAGVVGETPTIEPDTAYQYTSGTVLETPFGVMEGNYGMVTENGEMFKAKIPPFRLSIPGLLH.

The ApaG domain occupies 2 to 126 (TELETSIKID…FRLSIPGLLH (125 aa)).

This Shewanella woodyi (strain ATCC 51908 / MS32) protein is Protein ApaG.